A 67-amino-acid chain; its full sequence is Archaeal histone HAN1 subunit A (67 aa).

Interaction with DNA regions lie at residues 20-22 and 54-57; these read RVS and KTVK.

The protein belongs to the archaeal histone HMF family. Heterodimer. Dimers then assemble into higher oligomers, with the DNA wrapped around the protein core.

The protein resides in the cytoplasm. Its subcellular location is the chromosome. Its function is as follows. Binds and compact DNA (95 to 150 base pairs) to form nucleosome-like structures that contain positive DNA supercoils. Increases the resistance of DNA to thermal denaturation (in vitro). This is Archaeal histone HAN1 subunit A (han1A) from Thermococcus zilligii.